The sequence spans 462 residues: SET domain-containing protein SmydA-8, isoform A (462 aa).

Residues 55–287 (PNWTISSSTV…KGGEITTTYT (233 aa)) enclose the SET domain.

Belongs to the class V-like SAM-binding methyltransferase superfamily.

This chain is SET domain-containing protein SmydA-8, isoform A, found in Drosophila melanogaster (Fruit fly).